The following is a 502-amino-acid chain: Interleukin-17 receptor B (502 aa).

The signal sequence occupies residues 1–17; the sequence is MSLVLLSLAALCRSAVP. Over 18–292 the chain is Extracellular; sequence REPTVQCGSE…NKSKPGGWLP (275 aa). Residues Asn-67, Asn-103, Asn-156, Asn-183, Asn-197, and Asn-283 are each glycosylated (N-linked (GlcNAc...) asparagine). Residues 293 to 313 form a helical membrane-spanning segment; it reads LLLLSLLVATWVLVAGIYLMW. At 314–502 the chain is on the cytoplasmic side; it reads RHERIKKTSF…QACHDGCCSL (189 aa). Residues 331–477 enclose the SEFIR domain; the sequence is PIKVLVVYPS…LMKDATAFCA (147 aa).

In terms of assembly, interacts with DAZAP2. Interacts with TRAF3IP2. In terms of tissue distribution, expressed in several endocrine tissues, mostly in fetal and adult liver, kidney, pancreas, testis, colon, brain and small intestine; not detected in peripheral blood leukocytes, lymphoid organs, and most cell lines.

It localises to the cell membrane. It is found in the secreted. Functionally, receptor for the pro-inflammatory cytokines IL17B and IL17E. May play a role in controlling the growth and/or differentiation of hematopoietic cells. This Homo sapiens (Human) protein is Interleukin-17 receptor B (IL17RB).